The following is a 218-amino-acid chain: Thiopurine S-methyltransferase (218 aa).

S-adenosyl-L-methionine-binding residues include W10, L45, E66, and R123.

This sequence belongs to the class I-like SAM-binding methyltransferase superfamily. TPMT family.

The protein localises to the cytoplasm. The enzyme catalyses S-adenosyl-L-methionine + a thiopurine = S-adenosyl-L-homocysteine + a thiopurine S-methylether.. The sequence is that of Thiopurine S-methyltransferase from Shewanella baltica (strain OS155 / ATCC BAA-1091).